The sequence spans 869 residues: Leucine--tRNA ligase (869 aa).

Residues 42 to 52 (PYPSGKLHMGH) carry the 'HIGH' region motif. A 'KMSKS' region motif is present at residues 624-628 (TMSKS). Lysine 627 contributes to the ATP binding site.

This sequence belongs to the class-I aminoacyl-tRNA synthetase family.

Its subcellular location is the cytoplasm. It carries out the reaction tRNA(Leu) + L-leucine + ATP = L-leucyl-tRNA(Leu) + AMP + diphosphate. This Nitrosomonas europaea (strain ATCC 19718 / CIP 103999 / KCTC 2705 / NBRC 14298) protein is Leucine--tRNA ligase.